The primary structure comprises 340 residues: Adenine deaminase (340 aa).

Zn(2+) is bound by residues His-17, His-19, and His-197. Catalysis depends on Glu-200, which acts as the Proton donor. Asp-278 provides a ligand contact to Zn(2+). Asp-279 contacts substrate.

It belongs to the metallo-dependent hydrolases superfamily. Adenosine and AMP deaminases family. Adenine deaminase type 2 subfamily. Requires Zn(2+) as cofactor.

The enzyme catalyses adenine + H2O + H(+) = hypoxanthine + NH4(+). In terms of biological role, catalyzes the hydrolytic deamination of adenine to hypoxanthine. Plays an important role in the purine salvage pathway and in nitrogen catabolism. The protein is Adenine deaminase of Streptomyces coelicolor (strain ATCC BAA-471 / A3(2) / M145).